The chain runs to 1366 residues: DNA-directed RNA polymerase subunit beta' (1366 aa).

Basic residues predominate over residues 1–20 (MTSSKPKKTSRVRKTTKNSK). The segment at 1 to 34 (MTSSKPKKTSRVRKTTKNSKKNNPLTMPALAKTP) is disordered. Zn(2+)-binding residues include Cys248, Cys315, Cys322, and Cys325. Residues 1291-1366 (YTVDMPQSPS…LQEEGLLSDE (76 aa)) form a disordered region. Over residues 1295–1305 (MPQSPSVSSTA) the composition is skewed to polar residues. Over residues 1354–1366 (LEGLQEEGLLSDE) the composition is skewed to low complexity.

Belongs to the RNA polymerase beta' chain family. RpoC2 subfamily. In terms of assembly, in cyanobacteria the RNAP catalytic core is composed of 2 alpha, 1 beta, 1 beta', 1 gamma and 1 omega subunit. When a sigma factor is associated with the core the holoenzyme is formed, which can initiate transcription. Zn(2+) serves as cofactor.

It carries out the reaction RNA(n) + a ribonucleoside 5'-triphosphate = RNA(n+1) + diphosphate. DNA-dependent RNA polymerase catalyzes the transcription of DNA into RNA using the four ribonucleoside triphosphates as substrates. In Prochlorococcus marinus (strain MIT 9301), this protein is DNA-directed RNA polymerase subunit beta'.